The chain runs to 302 residues: MRNRTLADLDRVVALGGGHGLGRVLSSLSSLGSRLTGIVTTTDNGGSTGRIRRSEGGIAWGDMRNCLNQLITEPSVASAMFEYRFGGNGELSGHNLGNLMLKALDHLSVRPLEAINLIRNLLKVDAHLIPMSEHPVDLMAIDDQGHEVYGEVNIDQLTTPIQELLLTPNVPATREAVHAINEADLIIIGPGSFYTSLMPILLLKEIAQALRRTPAPMVYIGNLGRELSLPAANLKLESKLAIMEQYVGKKVIDAVIVGPKVDVSAVKERIVIQEVLEASDIPYRHDRQLLHSALEKALQALG.

Belongs to the gluconeogenesis factor family.

It is found in the cytoplasm. Its function is as follows. Required for morphogenesis under gluconeogenic growth conditions. This is Putative gluconeogenesis factor (ybhK) from Escherichia coli O157:H7.